The following is a 373-amino-acid chain: Opsin Rh1 (373 aa).

Topologically, residues 1-49 (MESFAVAAAQLGPHFAPLSNGSVVDKVTPDMAHLISPYWNQFPAMDPIW) are extracellular. The N-linked (GlcNAc...) asparagine glycan is linked to N20. A helical membrane pass occupies residues 50–74 (AKILTAYMIMIGMISWCGNGVVIYI). Residues 75 to 86 (FATTKSLRTPAN) lie on the Cytoplasmic side of the membrane. The helical transmembrane segment at 87–112 (LLVINLAISDFGIMITNTPMMGINLY) threads the bilayer. Residues 113–126 (FETWVLGPMMCDIY) are Extracellular-facing. A disulfide bond links C123 and C200. The helical transmembrane segment at 127-146 (AGLGSAFGCSSIWSMCMISL) threads the bilayer. The Cytoplasmic portion of the chain corresponds to 147–165 (DRYQVIVKGMAGRPMTIPL). Residues 166-189 (ALGKIAYIWFMSSIWCLAPAFGWS) form a helical membrane-spanning segment. At 190–213 (RYVPEGNLTSCGIDYLERDWNPRS) the chain is on the extracellular side. N196 carries N-linked (GlcNAc...) asparagine glycosylation. A helical transmembrane segment spans residues 214 to 241 (YLIFYSIFVYYIPLFLICYSYWFIIAAV). Residues 242–276 (SAHEKAMREQAKKMNVKSLRSSEDAEKSAEGKLAK) are Cytoplasmic-facing. Residues 277 to 300 (VALVTITLWFMAWTPYLVINCMGL) form a helical membrane-spanning segment. Topologically, residues 301 to 307 (FKFEGLT) are extracellular. The helical transmembrane segment at 308 to 332 (PLNTIWGACFAKSAACYNPIVYGIS) threads the bilayer. K319 is modified (N6-(retinylidene)lysine). The Cytoplasmic segment spans residues 333 to 373 (HPKYRLALKEKCPCCVFGKVDDGKSSDAQSQATASEAESKA). The interval 354 to 373 (DGKSSDAQSQATASEAESKA) is disordered. Over residues 358 to 373 (SDAQSQATASEAESKA) the composition is skewed to low complexity.

It belongs to the G-protein coupled receptor 1 family. Opsin subfamily. Phosphorylated on some or all of the serine and threonine residues present in the C-terminal region.

It localises to the cell projection. Its subcellular location is the rhabdomere membrane. Functionally, visual pigments are the light-absorbing molecules that mediate vision. They consist of an apoprotein, opsin, covalently linked to cis-retinal. In Drosophila melanogaster (Fruit fly), this protein is Opsin Rh1 (ninaE).